The sequence spans 501 residues: Cytochrome P450 monooxygenase esdpH (501 aa).

Residues 5-22 (RVGILIIGVLATATFWLC) form a helical membrane-spanning segment. Cys-446 provides a ligand contact to heme.

The protein belongs to the cytochrome P450 family. Heme is required as a cofactor.

Its subcellular location is the membrane. It participates in secondary metabolite biosynthesis; terpenoid biosynthesis. In terms of biological role, cytochrome P450 monooxygenase; part of the cluster that mediates the biosynthesis of shearones, diterpenoid pyrones (DPs) which are structurally diverse meroterpenoids consisting of a diterpene linked by a pyrone, and which may exhibit a range of bioactivities. Whitin the pathway, esdpH takes part in the molecular scaffold modification via the hydroxylation at C-6' and can transform shearone C into shearone E, shearone D into shearone F, and shearone H into shearone I, the latter being the final product of the pathway. The molecular scaffold is commonly biosynthesized by a series of enzymes including the non-reducing polyketide synthase (NR-PKS) esdpA that generates an alpha-pyrone; the prenyltransferase esdpC that attaches a geranylgeranyl pyrophosphate (GGPP) produced by the GGPP synthase (GGPPS) esdpD onto the pyrone unit; the FAD-dependent monooxygenase esdpE that converts an olefin on the diterpene unit into an epoxide; and the terpene cyclase esdpB that catalyzes the cyclization reactions to give the molecular backbone shearone A. In the modification steps, esdpF oxidizes the hydroxy group to a ketone at C-3 and esdpG then attaches hydroxy groups at both C-11 and C-12. After that, esdpI hydroxylates at C-20 and esdpH hydroxylates at C-6'. The ether bridge is generated by nucleophilic attack of the hydroxy group at C-20 to the carbonyl carbon at C-3. EsdpH can also functions prior to esdpI. The different combinations of these modification enzymes lead to the production of diverse shearone derivatives, shearone I being the end product of the pathway. The alpha-ketoglutarate-dependent dioxygenase esdpJ seems not to be involved in this pathway. In Penicillium shearii (Eupenicillium shearii), this protein is Cytochrome P450 monooxygenase esdpH.